The primary structure comprises 173 residues: Translation initiation factor IF-3 (173 aa).

This sequence belongs to the IF-3 family. In terms of assembly, monomer.

The protein resides in the cytoplasm. Its function is as follows. IF-3 binds to the 30S ribosomal subunit and shifts the equilibrium between 70S ribosomes and their 50S and 30S subunits in favor of the free subunits, thus enhancing the availability of 30S subunits on which protein synthesis initiation begins. The sequence is that of Translation initiation factor IF-3 from Phenylobacterium zucineum (strain HLK1).